Reading from the N-terminus, the 202-residue chain is Phosphatidyl-N-methylethanolamine N-methyltransferase (202 aa).

The Lumenal segment spans residues 1 to 12; it reads MTTLSDYVDFSQ. The segment at residues 13–33 is an intramembrane region (helical); sequence DSFKYAALSIAFNPIFWNVVA. The Lumenal segment spans residues 34 to 45; that stretch reads RAEYRSHFLTRI. A helical membrane pass occupies residues 46–66; that stretch reads FGSPYRGCYFLAITIFSLGIL. The Cytoplasmic segment spans residues 67–90; sequence RDHIYQQALEDQPYYAPVHQPVLG. Residues 91–111 form a helical membrane-spanning segment; the sequence is GALFAVGSVLVLSSMYALGVT. 95–97 lines the S-adenosyl-L-methionine pocket; it reads AVG. The Lumenal portion of the chain corresponds to 112–154; it reads GTYLGDYFGILMDAPVTGFPFNVTGSPMYWGSTLNFLGVALYK. Residues 155-175 traverse the membrane as a helical segment; that stretch reads GKVAGILLTALVFVLYWFALK. The Cytoplasmic segment spans residues 176-202; that stretch reads WEDPFTAEIYAKRERERAKSKRGGKNQ. 177–178 lines the S-adenosyl-L-methionine pocket; it reads ED.

The protein belongs to the class VI-like SAM-binding methyltransferase superfamily. PEMT/PEM2 methyltransferase family.

Its subcellular location is the endoplasmic reticulum membrane. It is found in the mitochondrion membrane. The catalysed reaction is a 1,2-diacyl-sn-glycero-3-phospho-N-methylethanolamine + S-adenosyl-L-methionine = a 1,2-diacyl-sn-glycero-3-phospho-N,N-dimethylethanolamine + S-adenosyl-L-homocysteine + H(+). It carries out the reaction a 1,2-diacyl-sn-glycero-3-phospho-N,N-dimethylethanolamine + S-adenosyl-L-methionine = a 1,2-diacyl-sn-glycero-3-phosphocholine + S-adenosyl-L-homocysteine + H(+). It participates in phospholipid metabolism; phosphatidylcholine biosynthesis. In terms of biological role, catalyzes the second two steps of the methylation pathway of phosphatidylcholine biosynthesis, the SAM-dependent methylation of phosphatidylmonomethylethanolamine (PMME) to phosphatidyldimethylethanolamine (PDME) and of PDME to phosphatidylcholine (PC). This chain is Phosphatidyl-N-methylethanolamine N-methyltransferase, found in Emericella nidulans (strain FGSC A4 / ATCC 38163 / CBS 112.46 / NRRL 194 / M139) (Aspergillus nidulans).